A 214-amino-acid chain; its full sequence is Non-structural protein NP-1 (214 aa).

Disordered regions lie at residues 1–85 (MSSE…TRTN) and 192–214 (ESEE…NASN). Basic residues predominate over residues 33–43 (SRSRSPIRRHG). Over residues 44–55 (EKNLEYAHHNNQ) the composition is skewed to basic and acidic residues. Over residues 56–71 (DNRQSSYTASKTSDQA) the composition is skewed to polar residues. The segment covering 192–201 (ESEEVTDEEM) has biased composition (acidic residues).

This sequence belongs to the Bocaparvovirus Non-structural protein NP-1 family.

The protein localises to the host nucleus. Its function is as follows. Required for the expression of the capsid proteins. Performs the splicing and internal polyadenylation of the viral capsid-encoding mRNA precursor, which allows its maturation and expression. Transactivates the viral promoter. The sequence is that of Non-structural protein NP-1 (NP1) from Human bocavirus 4 (HBoV4).